A 173-amino-acid polypeptide reads, in one-letter code: Crossover junction endodeoxyribonuclease RuvC (173 aa).

Catalysis depends on residues Asp8, Glu67, and Asp139. Asp8, Glu67, and Asp139 together coordinate Mg(2+).

It belongs to the RuvC family. As to quaternary structure, homodimer which binds Holliday junction (HJ) DNA. The HJ becomes 2-fold symmetrical on binding to RuvC with unstacked arms; it has a different conformation from HJ DNA in complex with RuvA. In the full resolvosome a probable DNA-RuvA(4)-RuvB(12)-RuvC(2) complex forms which resolves the HJ. Requires Mg(2+) as cofactor.

The protein resides in the cytoplasm. It catalyses the reaction Endonucleolytic cleavage at a junction such as a reciprocal single-stranded crossover between two homologous DNA duplexes (Holliday junction).. Functionally, the RuvA-RuvB-RuvC complex processes Holliday junction (HJ) DNA during genetic recombination and DNA repair. Endonuclease that resolves HJ intermediates. Cleaves cruciform DNA by making single-stranded nicks across the HJ at symmetrical positions within the homologous arms, yielding a 5'-phosphate and a 3'-hydroxyl group; requires a central core of homology in the junction. The consensus cleavage sequence is 5'-(A/T)TT(C/G)-3'. Cleavage occurs on the 3'-side of the TT dinucleotide at the point of strand exchange. HJ branch migration catalyzed by RuvA-RuvB allows RuvC to scan DNA until it finds its consensus sequence, where it cleaves and resolves the cruciform DNA. In Proteus mirabilis (strain HI4320), this protein is Crossover junction endodeoxyribonuclease RuvC.